The sequence spans 250 residues: Methylthioribulose-1-phosphate dehydratase (250 aa).

2 residues coordinate Zn(2+): His-103 and His-105.

It belongs to the aldolase class II family. MtnB subfamily. Zn(2+) is required as a cofactor.

It catalyses the reaction 5-(methylsulfanyl)-D-ribulose 1-phosphate = 5-methylsulfanyl-2,3-dioxopentyl phosphate + H2O. It participates in amino-acid biosynthesis; L-methionine biosynthesis via salvage pathway; L-methionine from S-methyl-5-thio-alpha-D-ribose 1-phosphate: step 2/6. Catalyzes the dehydration of methylthioribulose-1-phosphate (MTRu-1-P) into 2,3-diketo-5-methylthiopentyl-1-phosphate (DK-MTP-1-P). The sequence is that of Methylthioribulose-1-phosphate dehydratase from Leptospira borgpetersenii serovar Hardjo-bovis (strain JB197).